A 301-amino-acid chain; its full sequence is MANSTDETATTTLAPAPCFLFDIEGTTTSISFVHEVLFPYARNQVEAFLAAHWDTDAVKADVDKLREQVSGCGKRSVADEAGPKEHGAEAASRLCASRPILLNLLEKIILTWPLVPTAHPLLELGHIWKDAYTSGNVKGHIYEDVVPAFQRLTEAGAQLYIYSSGSIAAQKLLFGHSEAGDLQPYLSGYFDTTTGPKRDAASYSDIAAAIGVTPQSIIFLSDRIEECRAASAAAMRTALVVRPGNAPLSEAERTEFPILHDFTGLRGAKFTQAQAGDTEAKRSASGDGALAAKKAPPTHDF.

Mg(2+) is bound by residues Asp-22 and Glu-24. Substrate contacts are provided by residues 163 to 164 and Lys-197; that span reads SS. Residue Asp-222 participates in Mg(2+) binding. A disordered region spans residues 273-301; that stretch reads AQAGDTEAKRSASGDGALAAKKAPPTHDF.

The protein belongs to the HAD-like hydrolase superfamily. MasA/MtnC family. Monomer. The cofactor is Mg(2+).

The protein localises to the cytoplasm. It is found in the nucleus. The catalysed reaction is 5-methylsulfanyl-2,3-dioxopentyl phosphate + H2O = 1,2-dihydroxy-5-(methylsulfanyl)pent-1-en-3-one + phosphate. It functions in the pathway amino-acid biosynthesis; L-methionine biosynthesis via salvage pathway; L-methionine from S-methyl-5-thio-alpha-D-ribose 1-phosphate: step 3/6. Its pathway is amino-acid biosynthesis; L-methionine biosynthesis via salvage pathway; L-methionine from S-methyl-5-thio-alpha-D-ribose 1-phosphate: step 4/6. In terms of biological role, bifunctional enzyme that catalyzes the enolization of 2,3-diketo-5-methylthiopentyl-1-phosphate (DK-MTP-1-P) into the intermediate 2-hydroxy-3-keto-5-methylthiopentenyl-1-phosphate (HK-MTPenyl-1-P), which is then dephosphorylated to form the acireductone 1,2-dihydroxy-3-keto-5-methylthiopentene (DHK-MTPene). In Monosiga brevicollis (Choanoflagellate), this protein is Enolase-phosphatase E1.